Consider the following 341-residue polypeptide: L-threonine 3-dehydrogenase (341 aa).

Residue C38 participates in Zn(2+) binding. Catalysis depends on charge relay system residues T40 and H43. The Zn(2+) site is built by H63, E64, C93, C96, C99, and C107. Residues I175, D195, R200, 262–264 (LGI), and 286–287 (IY) contribute to the NAD(+) site.

It belongs to the zinc-containing alcohol dehydrogenase family. In terms of assembly, homotetramer. The cofactor is Zn(2+).

It is found in the cytoplasm. It carries out the reaction L-threonine + NAD(+) = (2S)-2-amino-3-oxobutanoate + NADH + H(+). It functions in the pathway amino-acid degradation; L-threonine degradation via oxydo-reductase pathway; glycine from L-threonine: step 1/2. In terms of biological role, catalyzes the NAD(+)-dependent oxidation of L-threonine to 2-amino-3-ketobutyrate. This chain is L-threonine 3-dehydrogenase, found in Shewanella sediminis (strain HAW-EB3).